A 777-amino-acid polypeptide reads, in one-letter code: MNQKILEQLEFQKVKEQFQPYLQTAQGIQELRLLEPSNHYDKISDYFKEIAEMATIFVENHHFSIGNLRDVSESMRRLELEADLNIQELLDIKKLLLVSGEISRFYQDLENVDLQVLKRIFEKIEVFPQLQGSLQAVNDAAFIENFASPELDRLRRQIAENERYSRQLLQDILKKNADYLSESLIASRNGKSVLPVKNTFRHRVSGVVHDISASGNTVYIEPRALVQVNEEMTQLLADERHEIARILKELSQLLRPHSRALANNAWLLGHLDFVRAKYHYLVNNKATIPKISKDKNIQLLNVRHPLLKNPVANDLHFADDLAVIVITGPNTGGKTIMLKTLGLAQLMGQSGLPILADEGSKIAVFDAIYADIGDEQSIEQSLSTFSSHMTHIVDILEESNSNSLVLFDELGAGTDPQEGASLAMAILEQLRLTNIKTMATTHYPELKAYGIESDYVENASMEFDSQSLKPTYRFMQGVPGRSNAFEIARRLGLAETIVKEAEQMTDTDSDVNRIIEELERQTLSSRRRLDHIREVEQENIKFNRAVKKLYNEFSLAKDKEIEKASQEAQAIVELALTESEEILSKLHEKAELKPHEIIEAKSKLKSLVPQRDLSKNKVLKKAKKLREPRIGDDIIVSAYGQRGTLIGQVKGNKWEAQVGLIKMTLKEDEFQLVKVEAEAQKPKKQSINMVKKANQNGPRARLDLRGKRYEEAMQELDAFIDQALVNNMSQVDIIHGIGTGVIREAVTKYLRRHKHVKSFAYAPQNAGGSGCTIATLG.

Position 328-335 (Gly-328–Thr-335) interacts with ATP. A Smr domain is found at Leu-702–Gly-777.

This sequence belongs to the DNA mismatch repair MutS family. MutS2 subfamily. As to quaternary structure, homodimer. Binds to stalled ribosomes, contacting rRNA.

Endonuclease that is involved in the suppression of homologous recombination and thus may have a key role in the control of bacterial genetic diversity. Functionally, acts as a ribosome collision sensor, splitting the ribosome into its 2 subunits. Detects stalled/collided 70S ribosomes which it binds and splits by an ATP-hydrolysis driven conformational change. Acts upstream of the ribosome quality control system (RQC), a ribosome-associated complex that mediates the extraction of incompletely synthesized nascent chains from stalled ribosomes and their subsequent degradation. Probably generates substrates for RQC. This chain is Endonuclease MutS2, found in Streptococcus uberis (strain ATCC BAA-854 / 0140J).